The chain runs to 411 residues: Multifunctional CCA protein (411 aa).

ATP contacts are provided by glycine 8 and arginine 11. Glycine 8 and arginine 11 together coordinate CTP. Mg(2+) is bound by residues aspartate 21 and aspartate 23. Residues arginine 91, arginine 137, and arginine 140 each coordinate ATP. Arginine 91, arginine 137, and arginine 140 together coordinate CTP. In terms of domain architecture, HD spans 226–327; the sequence is TGVHVMLVID…LRFLQETDAL (102 aa).

It belongs to the tRNA nucleotidyltransferase/poly(A) polymerase family. Bacterial CCA-adding enzyme type 1 subfamily. As to quaternary structure, monomer. Can also form homodimers and oligomers. Mg(2+) serves as cofactor. Requires Ni(2+) as cofactor.

It catalyses the reaction a tRNA precursor + 2 CTP + ATP = a tRNA with a 3' CCA end + 3 diphosphate. The enzyme catalyses a tRNA with a 3' CCA end + 2 CTP + ATP = a tRNA with a 3' CCACCA end + 3 diphosphate. Functionally, catalyzes the addition and repair of the essential 3'-terminal CCA sequence in tRNAs without using a nucleic acid template. Adds these three nucleotides in the order of C, C, and A to the tRNA nucleotide-73, using CTP and ATP as substrates and producing inorganic pyrophosphate. tRNA 3'-terminal CCA addition is required both for tRNA processing and repair. Also involved in tRNA surveillance by mediating tandem CCA addition to generate a CCACCA at the 3' terminus of unstable tRNAs. While stable tRNAs receive only 3'-terminal CCA, unstable tRNAs are marked with CCACCA and rapidly degraded. This chain is Multifunctional CCA protein, found in Methylobacillus flagellatus (strain ATCC 51484 / DSM 6875 / VKM B-1610 / KT).